Reading from the N-terminus, the 310-residue chain is Small ribosomal subunit protein uS2 (310 aa).

The span at tryptophan 249–alanine 272 shows a compositional bias: basic and acidic residues. Residues tryptophan 249–alanine 310 are disordered. The segment covering glutamate 273 to alanine 310 has biased composition (low complexity).

This sequence belongs to the universal ribosomal protein uS2 family.

The protein is Small ribosomal subunit protein uS2 (rpsB) of Streptomyces coelicolor (strain ATCC BAA-471 / A3(2) / M145).